The primary structure comprises 448 residues: Exodeoxyribonuclease 7 large subunit (448 aa).

It belongs to the XseA family. Heterooligomer composed of large and small subunits.

It is found in the cytoplasm. It catalyses the reaction Exonucleolytic cleavage in either 5'- to 3'- or 3'- to 5'-direction to yield nucleoside 5'-phosphates.. In terms of biological role, bidirectionally degrades single-stranded DNA into large acid-insoluble oligonucleotides, which are then degraded further into small acid-soluble oligonucleotides. In Histophilus somni (strain 129Pt) (Haemophilus somnus), this protein is Exodeoxyribonuclease 7 large subunit.